The chain runs to 86 residues: Large ribosomal subunit protein bL27c (86 aa).

Residues 1 to 27 are disordered; the sequence is MAHKKGSGSTRNGRDSNSKRLGVKKYG.

Belongs to the bacterial ribosomal protein bL27 family.

Its subcellular location is the plastid. The protein resides in the chloroplast. The polypeptide is Large ribosomal subunit protein bL27c (rpl27) (Porphyra purpurea (Red seaweed)).